Consider the following 547-residue polypeptide: Cytochrome P450 monooxygenase fsoD (547 aa).

The helical transmembrane segment at 3-23 (DITLAAVSIGLFFYVGARAVL) threads the bilayer. Cys490 lines the heme pocket.

This sequence belongs to the cytochrome P450 family. It depends on heme as a cofactor.

The protein localises to the membrane. The catalysed reaction is isomotiol + reduced [NADPH--hemoprotein reductase] + O2 = 2alpha-hydroxyisomotiol + oxidized [NADPH--hemoprotein reductase] + H2O + H(+). It participates in secondary metabolite biosynthesis; terpenoid biosynthesis. In terms of biological role, cytochrome P450 monooxygenase; part of the gene cluster that mediates the biosynthesis of the enfumafungin-type antibiotic, fuscoatroside. Within the pathway, fsoD catalyzes the hydroxylation at position C2 of isomotiol to produce 2-alpha-hydroxy-isomotiol. FsoD may also hydroxylate the intermediates 3-O-(beta-D-glucopyranosyl)-isomotiol and 2-deacetoxy-fuscoatroside at the same position C2. The fuscoatroside biosynthesis is initiated by the cyclization of 2,3(S)-oxidosqualene through FsoA's terpene cyclase (TC) domain, leading to the formation of the fernane skeleton isomotiol, harboring a fernane triterpene skeleton with a C8-C9 double bond. Subsequently, C2-alpha-hydroxylation mediated by fsoD results in the production of 2-alpha-hydroxy-isomotiol, which is further acetylated by fsoF. The glycosyltransferase (GT) domain of FsoA may convert isomotiol, 2-alpha-hydroxy-isomotiol, and the acetylated derivative of 2-alpha-hydroxy-isomotiol into their corresponding glycosides 3-O-(beta-D-glucopyranosyl)-isomotiol, 3-O-(beta-D-glucopyranosyl)-2-alpha-hydroxy-isomotiol, and 3-O-(beta-D-glucopyranosyl)-2-alpha-acetoxy-isomotiol, which then undergo oxidative cleavage under the action of fsoE to form s 2-deacetoxy-fuscoatroside, 2-deacetyl-fuscoatroside, and fuscoatroside, respectively. Although hydroxylation followed by acetylation of 3-O-(beta-D-glucopyranosyl)-isomotiol and 2-deacetoxy-fuscoatroside by fsoD and fsoF could not be ruled out, this process is likely to occur with difficulty due to bulky steric hindrance caused by the presence of a glycan at C3 in these compounds. Interestingly, fsoE can also utilize the aglycones isomotiol and 2-alpha-hydroxy-isomotiol as substrates to generate 19-beta-hydroxy-isomotiol and 2-alpha,19-beta-dihydroxy-isomotiol, respectively. These reactions occur with lower efficiency. Finally, fsoE can further convert 2-alpha,19-beta-dihydroxy-isomotiol into 2-alpha-hydroxy-ismotiol-19-one and 2-alpha-hydroxy-ismotiol-19-one into 2-deacetyl-3-deglucopyranosyl-fuscoatroside. The chain is Cytochrome P450 monooxygenase fsoD from Humicola fuscoatra.